The following is a 488-amino-acid chain: Ribulose bisphosphate carboxylase large chain (488 aa).

Residues Asn-127 and Thr-177 each coordinate substrate. The active-site Proton acceptor is the Lys-179. Residue Lys-181 coordinates substrate. Residues Lys-205, Asp-207, and Glu-208 each contribute to the Mg(2+) site. Residue Lys-205 is modified to N6-carboxylysine. The Proton acceptor role is filled by His-297. Substrate-binding residues include Arg-298, His-330, and Ser-382.

The protein belongs to the RuBisCO large chain family. Type I subfamily. As to quaternary structure, heterohexadecamer of 8 large chains and 8 small chains. Requires Mg(2+) as cofactor.

The protein localises to the plastid. It localises to the chloroplast. It catalyses the reaction 2 (2R)-3-phosphoglycerate + 2 H(+) = D-ribulose 1,5-bisphosphate + CO2 + H2O. The catalysed reaction is D-ribulose 1,5-bisphosphate + O2 = 2-phosphoglycolate + (2R)-3-phosphoglycerate + 2 H(+). RuBisCO catalyzes two reactions: the carboxylation of D-ribulose 1,5-bisphosphate, the primary event in carbon dioxide fixation, as well as the oxidative fragmentation of the pentose substrate in the photorespiration process. Both reactions occur simultaneously and in competition at the same active site. The protein is Ribulose bisphosphate carboxylase large chain of Porphyridium aerugineum (Red microalga).